The sequence spans 456 residues: Bacteriochlorophyllide d C-12(1)-methyltransferase (456 aa).

The region spanning H178–E405 is the Radical SAM core domain. [4Fe-4S] cluster is bound by residues C194, C198, and C201.

Belongs to the radical SAM superfamily. It depends on [4Fe-4S] cluster as a cofactor.

It is found in the cytoplasm. It carries out the reaction 8-ethyl-12-methyl-3-vinylbacteriochlorophyllide d + S-adenosyl-L-methionine = 8,12-diethyl-3-vinylbacteriochlorophyllide d + S-adenosyl-L-homocysteine + H(+). It participates in porphyrin-containing compound metabolism; bacteriochlorophyll biosynthesis (light-independent). Involved in the biosynthesis of the major light-harvesting pigment bacteriochlorophyll c (BChlc), which confers a significant competitive advantage to green sulfur bacteria living at limiting red and near-infrared light intensities. BchR is a methyltransferase that adds a single methyl group to the methyl carbon at the C-12(1) position of 8-ethyl-12-methyl-3-vinylbacteriochlorophyllide d to yield 8,12-diethyl-3-vinylbacteriochlorophyllide d. This is Bacteriochlorophyllide d C-12(1)-methyltransferase from Chlorobaculum tepidum (strain ATCC 49652 / DSM 12025 / NBRC 103806 / TLS) (Chlorobium tepidum).